Consider the following 666-residue polypeptide: Endogenous retrovirus group K member 9 Gag polyprotein (666 aa).

G2 carries N-myristoyl glycine lipidation. The interval 165 to 264 (GKGPELVGPS…APPSRQGSEL (100 aa)) is disordered. Residues 232 to 247 (GMPPAPQGRAPYPQPP) show a composition bias toward pro residues. 2 consecutive CCHC-type zinc fingers follow at residues 544–561 (GKCYNCGQIGHLKKNCPV) and 580–597 (DLCPRCKKGKHWASQCRS). Positions 598–641 (KFDKNGQPLSGNEQRGQPQAPQQTGAFPIQPFVPQGFQGQQPPL) are disordered. Residues 604-622 (QPLSGNEQRGQPQAPQQTG) show a composition bias toward polar residues. Over residues 624–640 (FPIQPFVPQGFQGQQPP) the composition is skewed to low complexity.

It belongs to the beta type-B retroviral Gag protein family. HERV class-II K(HML-2) gag subfamily. In terms of processing, myristoylation is essential for retroviral assembly. Alteration of the glycine residue leads to a block in the budding of particles and an accumulation of Gag inside the cell. Post-translationally, specific enzymatic cleavages may yield mature proteins.

Its subcellular location is the cell membrane. Functionally, the products of the Gag polyproteins of infectious retroviruses perform highly complex orchestrated tasks during the assembly, budding, maturation, and infection stages of the viral replication cycle. During viral assembly, the proteins form membrane associations and self-associations that ultimately result in budding of an immature virion from the infected cell. Gag precursors also function during viral assembly to selectively bind and package two plus strands of genomic RNA. Endogenous Gag proteins may have kept, lost or modified their original function during evolution. This Homo sapiens (Human) protein is Endogenous retrovirus group K member 9 Gag polyprotein (ERVK-9).